The following is a 31-amino-acid chain: Bacteriocin lactocin-705 (31 aa).

Its function is as follows. Antibacterial activity against several lactic acid bacteria, Listeria, Streptococci, etc. In Lacticaseibacillus paracasei (Lactobacillus paracasei), this protein is Bacteriocin lactocin-705.